Here is a 148-residue protein sequence, read N- to C-terminus: Large ribosomal subunit protein bL9 (148 aa).

It belongs to the bacterial ribosomal protein bL9 family.

Functionally, binds to the 23S rRNA. The sequence is that of Large ribosomal subunit protein bL9 from Caldicellulosiruptor bescii (strain ATCC BAA-1888 / DSM 6725 / KCTC 15123 / Z-1320) (Anaerocellum thermophilum).